The following is a 106-amino-acid chain: Chaperone modulatory protein CbpM (106 aa).

The protein belongs to the CbpM family.

Interacts with CbpA and inhibits both the DnaJ-like co-chaperone activity and the DNA binding activity of CbpA. Together with CbpA, modulates the activity of the DnaK chaperone system. Does not inhibit the co-chaperone activity of DnaJ. This Coxiella burnetii (strain CbuK_Q154) (Coxiella burnetii (strain Q154)) protein is Chaperone modulatory protein CbpM.